The primary structure comprises 214 residues: Thymidylate kinase (214 aa).

7 to 14 serves as a coordination point for ATP; that stretch reads GVDGAGKR. 7 residues coordinate dTMP: aspartate 9, tyrosine 39, phenylalanine 70, arginine 74, arginine 95, asparagine 100, and tyrosine 103. Mg(2+) is bound at residue aspartate 9. The LID stretch occupies residues 147 to 159; sequence GERSRGRAQRDPG. DTMP contacts are provided by aspartate 163 and tyrosine 165. Glutamate 166 contacts Mg(2+).

This sequence belongs to the thymidylate kinase family. In terms of assembly, homodimer. Requires Mg(2+) as cofactor.

The catalysed reaction is dTMP + ATP = dTDP + ADP. It functions in the pathway pyrimidine metabolism; dTTP biosynthesis. In terms of biological role, catalyzes the reversible phosphorylation of deoxythymidine monophosphate (dTMP) to deoxythymidine diphosphate (dTDP), using ATP as its preferred phosphoryl donor. Situated at the junction of both de novo and salvage pathways of deoxythymidine triphosphate (dTTP) synthesis, is essential for DNA synthesis and cellular growth. The protein is Thymidylate kinase (tmk) of Mycobacterium tuberculosis (strain CDC 1551 / Oshkosh).